The primary structure comprises 425 residues: UDP-N-acetylglucosamine 1-carboxyvinyltransferase (425 aa).

25–26 provides a ligand contact to phosphoenolpyruvate; the sequence is KN. Position 95 (arginine 95) interacts with UDP-N-acetyl-alpha-D-glucosamine. Cysteine 119 serves as the catalytic Proton donor. 2-(S-cysteinyl)pyruvic acid O-phosphothioketal is present on cysteine 119. Residues 124–128, aspartate 306, and isoleucine 328 contribute to the UDP-N-acetyl-alpha-D-glucosamine site; that span reads RPVDQ.

It belongs to the EPSP synthase family. MurA subfamily.

It is found in the cytoplasm. The enzyme catalyses phosphoenolpyruvate + UDP-N-acetyl-alpha-D-glucosamine = UDP-N-acetyl-3-O-(1-carboxyvinyl)-alpha-D-glucosamine + phosphate. The protein operates within cell wall biogenesis; peptidoglycan biosynthesis. In terms of biological role, cell wall formation. Adds enolpyruvyl to UDP-N-acetylglucosamine. This is UDP-N-acetylglucosamine 1-carboxyvinyltransferase from Thermus thermophilus (strain ATCC BAA-163 / DSM 7039 / HB27).